The chain runs to 257 residues: DNA-binding and peroxide stress resistance protein YaaA (257 aa).

The short motif at 35-66 is the Helix-hairpin-helix element; sequence IGIARKLSAPQIGKLMSISDKLADLNATRFHD.

The protein belongs to the UPF0246 family.

Its subcellular location is the cytoplasm. Protects bacteria from neutrophil-related defense upon infection of mammals. Binds DNA. This is DNA-binding and peroxide stress resistance protein YaaA from Klebsiella pneumoniae subsp. pneumoniae (strain HS11286).